The sequence spans 305 residues: Putative monooxygenase p33MONOX (305 aa).

The interval leucine 37 to lysine 56 is disordered. Threonine 44 carries the post-translational modification Phosphothreonine. The Flavin-containing monooxygenase motif signature appears at leucine 67 to leucine 77. 2 disordered regions span residues glutamine 158–serine 236 and glutamine 259–phenylalanine 305. Low complexity predominate over residues proline 169 to serine 183. At threonine 175 the chain carries Phosphothreonine. Phosphoserine is present on residues serine 182 and serine 183. Residues threonine 193–serine 210 show a composition bias toward polar residues.

Belongs to the P33MONOX family. In terms of assembly, interacts with NELFB, NOL12 and PRNP. As to expression, down-regulated in the occipital lobe of an early stage Alzheimer disease patients.

The protein resides in the cytoplasm. Functionally, potential NADPH-dependent oxidoreductase. May be involved in the regulation of neuronal survival, differentiation and axonal outgrowth. The polypeptide is Putative monooxygenase p33MONOX (KIAA1191) (Homo sapiens (Human)).